Consider the following 344-residue polypeptide: GTP 3',8-cyclase (344 aa).

In terms of domain architecture, Radical SAM core spans 19–239; that stretch reads PFGRTIDYLR…ANYTLTDLPD (221 aa). R28 contacts GTP. 2 residues coordinate [4Fe-4S] cluster: C35 and C39. Y41 is a binding site for S-adenosyl-L-methionine. A [4Fe-4S] cluster-binding site is contributed by C42. R77 contacts GTP. G81 contacts S-adenosyl-L-methionine. Residue T111 coordinates GTP. S135 serves as a coordination point for S-adenosyl-L-methionine. K171 contacts GTP. Residue M205 participates in S-adenosyl-L-methionine binding. 2 residues coordinate [4Fe-4S] cluster: C268 and C271. 273 to 275 contributes to the GTP binding site; the sequence is RVR. C285 is a [4Fe-4S] cluster binding site.

Belongs to the radical SAM superfamily. MoaA family. In terms of assembly, monomer and homodimer. It depends on [4Fe-4S] cluster as a cofactor.

The enzyme catalyses GTP + AH2 + S-adenosyl-L-methionine = (8S)-3',8-cyclo-7,8-dihydroguanosine 5'-triphosphate + 5'-deoxyadenosine + L-methionine + A + H(+). It participates in cofactor biosynthesis; molybdopterin biosynthesis. In terms of biological role, catalyzes the cyclization of GTP to (8S)-3',8-cyclo-7,8-dihydroguanosine 5'-triphosphate. In Rhodopseudomonas palustris (strain TIE-1), this protein is GTP 3',8-cyclase.